A 353-amino-acid chain; its full sequence is Quinolinate synthase (353 aa).

Positions 47 and 68 each coordinate iminosuccinate. Cysteine 113 contributes to the [4Fe-4S] cluster binding site. Residues tyrosine 139–asparagine 141 and serine 156 each bind iminosuccinate. Cysteine 200 lines the [4Fe-4S] cluster pocket. Residues histidine 226–glutamate 228 and threonine 243 each bind iminosuccinate. Position 297 (cysteine 297) interacts with [4Fe-4S] cluster.

It belongs to the quinolinate synthase family. Type 1 subfamily. [4Fe-4S] cluster is required as a cofactor.

It localises to the cytoplasm. It catalyses the reaction iminosuccinate + dihydroxyacetone phosphate = quinolinate + phosphate + 2 H2O + H(+). It functions in the pathway cofactor biosynthesis; NAD(+) biosynthesis; quinolinate from iminoaspartate: step 1/1. Catalyzes the condensation of iminoaspartate with dihydroxyacetone phosphate to form quinolinate. This is Quinolinate synthase from Vibrio parahaemolyticus serotype O3:K6 (strain RIMD 2210633).